The chain runs to 519 residues: Cytosol aminopeptidase (519 aa).

K45 is subject to N6-succinyllysine. Phosphoserine is present on S54. N6-succinyllysine is present on residues K61 and K103. Phosphoserine is present on residues S180 and S194. 2 residues coordinate Zn(2+): L202 and M203. The residue at position 221 (K221) is an N6-acetyllysine; alternate. At K221 the chain carries N6-succinyllysine; alternate. At S238 the chain carries Phosphoserine. Zn(2+)-binding residues include K282 and D287. Residues K282, D287, S292, and K294 each contribute to the substrate site. Residue D287 participates in Mg(2+) binding. K294 is a catalytic residue. Zn(2+) contacts are provided by R303, D305, D364, and E366. Substrate is bound by residues D305 and D364. Positions 364 and 366 each coordinate Mg(2+). R368 is a catalytic residue. K455 is subject to N6-acetyllysine; alternate. K455 carries the N6-succinyllysine; alternate modification. An N6-succinyllysine modification is found at K476. K489 is modified (N6-acetyllysine; alternate). K489 carries the post-translational modification N6-succinyllysine; alternate.

The protein belongs to the peptidase M17 family. Homohexamer. Zn(2+) serves as cofactor. Requires Mn(2+) as cofactor.

It is found in the cytoplasm. The enzyme catalyses Release of an N-terminal amino acid, Xaa-|-Yaa-, in which Xaa is preferably Leu, but may be other amino acids including Pro although not Arg or Lys, and Yaa may be Pro. Amino acid amides and methyl esters are also readily hydrolyzed, but rates on arylamides are exceedingly low.. It catalyses the reaction an S-substituted L-cysteinylglycine + H2O = an S-substituted L-cysteine + glycine. It carries out the reaction L-cysteinylglycine + H2O = L-cysteine + glycine. The catalysed reaction is S-benzyl-L-cysteinylglycine + H2O = S-benzyl-L-cysteine + glycine. The enzyme catalyses Release of N-terminal proline from a peptide.. Cytosolic metallopeptidase that catalyzes the removal of unsubstituted N-terminal hydrophobic amino acids from various peptides. The presence of Zn(2+) ions is essential for the peptidase activity, and the association with other cofactors can modulate the substrate spectificity of the enzyme. For instance, in the presence of Mn(2+), it displays a specific Cys-Gly hydrolyzing activity of Cys-Gly-S-conjugates. Involved in the metabolism of glutathione and in the degradation of glutathione S-conjugates, which may play a role in the control of the cell redox status. This is Cytosol aminopeptidase from Mus musculus (Mouse).